The chain runs to 572 residues: Sulfite reductase [NADPH] hemoprotein beta-component (572 aa).

[4Fe-4S] cluster contacts are provided by C437, C443, C482, and C486. C486 contributes to the siroheme binding site.

It belongs to the nitrite and sulfite reductase 4Fe-4S domain family. In terms of assembly, alpha(8)-beta(8). The alpha component is a flavoprotein, the beta component is a hemoprotein. Siroheme is required as a cofactor. It depends on [4Fe-4S] cluster as a cofactor.

The catalysed reaction is hydrogen sulfide + 3 NADP(+) + 3 H2O = sulfite + 3 NADPH + 4 H(+). The protein operates within sulfur metabolism; hydrogen sulfide biosynthesis; hydrogen sulfide from sulfite (NADPH route): step 1/1. In terms of biological role, component of the sulfite reductase complex that catalyzes the 6-electron reduction of sulfite to sulfide. This is one of several activities required for the biosynthesis of L-cysteine from sulfate. This chain is Sulfite reductase [NADPH] hemoprotein beta-component, found in Bacillus licheniformis (strain ATCC 14580 / DSM 13 / JCM 2505 / CCUG 7422 / NBRC 12200 / NCIMB 9375 / NCTC 10341 / NRRL NRS-1264 / Gibson 46).